The chain runs to 292 residues: Ribosomal protein L11 methyltransferase (292 aa).

Thr-144, Gly-165, Asp-187, and Asn-229 together coordinate S-adenosyl-L-methionine.

Belongs to the methyltransferase superfamily. PrmA family.

The protein resides in the cytoplasm. It carries out the reaction L-lysyl-[protein] + 3 S-adenosyl-L-methionine = N(6),N(6),N(6)-trimethyl-L-lysyl-[protein] + 3 S-adenosyl-L-homocysteine + 3 H(+). Functionally, methylates ribosomal protein L11. The chain is Ribosomal protein L11 methyltransferase from Pseudomonas syringae pv. tomato (strain ATCC BAA-871 / DC3000).